Here is a 288-residue protein sequence, read N- to C-terminus: Acetyl-coenzyme A carboxylase carboxyl transferase subunit beta (288 aa).

The CoA carboxyltransferase N-terminal domain maps to 34–288 (LFAKCPACKH…HLVAFHGGGQ (255 aa)). Residues cysteine 38, cysteine 41, cysteine 56, and cysteine 59 each contribute to the Zn(2+) site. The C4-type zinc-finger motif lies at 38–59 (CPACKHMIYKKDLGLAKICPTC).

Belongs to the AccD/PCCB family. Acetyl-CoA carboxylase is a heterohexamer composed of biotin carboxyl carrier protein (AccB), biotin carboxylase (AccC) and two subunits each of ACCase subunit alpha (AccA) and ACCase subunit beta (AccD). The cofactor is Zn(2+).

It localises to the cytoplasm. It catalyses the reaction N(6)-carboxybiotinyl-L-lysyl-[protein] + acetyl-CoA = N(6)-biotinyl-L-lysyl-[protein] + malonyl-CoA. Its pathway is lipid metabolism; malonyl-CoA biosynthesis; malonyl-CoA from acetyl-CoA: step 1/1. Component of the acetyl coenzyme A carboxylase (ACC) complex. Biotin carboxylase (BC) catalyzes the carboxylation of biotin on its carrier protein (BCCP) and then the CO(2) group is transferred by the transcarboxylase to acetyl-CoA to form malonyl-CoA. The protein is Acetyl-coenzyme A carboxylase carboxyl transferase subunit beta of Streptococcus pyogenes serotype M3 (strain ATCC BAA-595 / MGAS315).